The chain runs to 294 residues: Acetylglutamate kinase (294 aa).

Substrate contacts are provided by residues 63–64 (GG), Arg85, and Asn188.

The protein belongs to the acetylglutamate kinase family. ArgB subfamily.

The protein localises to the cytoplasm. The enzyme catalyses N-acetyl-L-glutamate + ATP = N-acetyl-L-glutamyl 5-phosphate + ADP. It functions in the pathway amino-acid biosynthesis; L-arginine biosynthesis; N(2)-acetyl-L-ornithine from L-glutamate: step 2/4. In terms of biological role, catalyzes the ATP-dependent phosphorylation of N-acetyl-L-glutamate. The sequence is that of Acetylglutamate kinase from Methanococcus aeolicus (strain ATCC BAA-1280 / DSM 17508 / OCM 812 / Nankai-3).